Reading from the N-terminus, the 95-residue chain is Large ribosomal subunit protein uL23 (95 aa).

Belongs to the universal ribosomal protein uL23 family. As to quaternary structure, contacts protein L29, and trigger factor when it is bound to the ribosome. Part of the 50S ribosomal subunit.

Its function is as follows. One of the early assembly proteins it binds 23S rRNA. One of the proteins that surrounds the polypeptide exit tunnel on the outside of the ribosome. Forms the main docking site for trigger factor binding to the ribosome. This Geobacillus stearothermophilus (Bacillus stearothermophilus) protein is Large ribosomal subunit protein uL23.